Reading from the N-terminus, the 318-residue chain is Phosphate acetyltransferase (318 aa).

It belongs to the phosphate acetyltransferase and butyryltransferase family.

The protein localises to the cytoplasm. The enzyme catalyses acetyl-CoA + phosphate = acetyl phosphate + CoA. Its pathway is metabolic intermediate biosynthesis; acetyl-CoA biosynthesis; acetyl-CoA from acetate: step 2/2. The polypeptide is Phosphate acetyltransferase (pta) (Paracoccus denitrificans).